We begin with the raw amino-acid sequence, 252 residues long: Imidazole glycerol phosphate synthase subunit HisF (252 aa).

Residues Asp-11 and Asp-130 contribute to the active site.

This sequence belongs to the HisA/HisF family. In terms of assembly, heterodimer of HisH and HisF.

The protein localises to the cytoplasm. The catalysed reaction is 5-[(5-phospho-1-deoxy-D-ribulos-1-ylimino)methylamino]-1-(5-phospho-beta-D-ribosyl)imidazole-4-carboxamide + L-glutamine = D-erythro-1-(imidazol-4-yl)glycerol 3-phosphate + 5-amino-1-(5-phospho-beta-D-ribosyl)imidazole-4-carboxamide + L-glutamate + H(+). The protein operates within amino-acid biosynthesis; L-histidine biosynthesis; L-histidine from 5-phospho-alpha-D-ribose 1-diphosphate: step 5/9. IGPS catalyzes the conversion of PRFAR and glutamine to IGP, AICAR and glutamate. The HisF subunit catalyzes the cyclization activity that produces IGP and AICAR from PRFAR using the ammonia provided by the HisH subunit. The sequence is that of Imidazole glycerol phosphate synthase subunit HisF from Sulfurihydrogenibium sp. (strain YO3AOP1).